The following is a 42-amino-acid chain: Aryl-alcohol dehydrogenase (42 aa).

It belongs to the zinc-containing alcohol dehydrogenase family. Homodimer. The cofactor is Zn(2+).

The catalysed reaction is an aromatic primary alcohol + NAD(+) = an aromatic aldehyde + NADH + H(+). Functionally, oxidizes primary alcohols with an aromatic or cyclohex-1-ene ring. It is highly specific for benzyl alcohol. The polypeptide is Aryl-alcohol dehydrogenase (Acinetobacter guillouiae (Acinetobacter genomosp. 11)).